The primary structure comprises 398 residues: Phosphoglycerate kinase (398 aa).

Residues Asp23–Asn25, Arg38, His61–Lys64, Arg122, and Arg155 each bind substrate. Residues Lys206, Gly297, Glu328, and Gly354–Ser357 contribute to the ATP site.

Belongs to the phosphoglycerate kinase family. As to quaternary structure, monomer.

It localises to the cytoplasm. The catalysed reaction is (2R)-3-phosphoglycerate + ATP = (2R)-3-phospho-glyceroyl phosphate + ADP. It functions in the pathway carbohydrate degradation; glycolysis; pyruvate from D-glyceraldehyde 3-phosphate: step 2/5. The protein is Phosphoglycerate kinase of Clostridium novyi (strain NT).